The primary structure comprises 436 residues: GTPase Der (436 aa).

EngA-type G domains lie at 4 to 167 (PVIA…PTDL) and 175 to 351 (IKFS…ENQN). GTP-binding positions include 10 to 17 (GRPNVGKS), 57 to 61 (DTGGI), 119 to 122 (NKAD), 181 to 188 (GRPNVGKS), 229 to 233 (DTAGI), and 294 to 297 (NKWD). In terms of domain architecture, KH-like spans 352-436 (RRIQSALLND…PIHLIPRQRK (85 aa)).

It belongs to the TRAFAC class TrmE-Era-EngA-EngB-Septin-like GTPase superfamily. EngA (Der) GTPase family. In terms of assembly, associates with the 50S ribosomal subunit.

Its function is as follows. GTPase that plays an essential role in the late steps of ribosome biogenesis. The polypeptide is GTPase Der (Latilactobacillus sakei subsp. sakei (strain 23K) (Lactobacillus sakei subsp. sakei)).